Reading from the N-terminus, the 343-residue chain is 3-dehydroquinate synthase (343 aa).

Residues 86–90 (GALLD), 110–111 (TT), K123, and K132 contribute to the NAD(+) site. E165, H229, and H243 together coordinate Zn(2+).

This sequence belongs to the sugar phosphate cyclases superfamily. Dehydroquinate synthase family. Requires Co(2+) as cofactor. It depends on Zn(2+) as a cofactor. The cofactor is NAD(+).

The protein resides in the cytoplasm. It carries out the reaction 7-phospho-2-dehydro-3-deoxy-D-arabino-heptonate = 3-dehydroquinate + phosphate. It participates in metabolic intermediate biosynthesis; chorismate biosynthesis; chorismate from D-erythrose 4-phosphate and phosphoenolpyruvate: step 2/7. Functionally, catalyzes the conversion of 3-deoxy-D-arabino-heptulosonate 7-phosphate (DAHP) to dehydroquinate (DHQ). The chain is 3-dehydroquinate synthase from Pyrobaculum neutrophilum (strain DSM 2338 / JCM 9278 / NBRC 100436 / V24Sta) (Thermoproteus neutrophilus).